The chain runs to 55 residues: ATP synthase F(0) complex subunit 8 (55 aa).

The helical transmembrane segment at 9-29 (WFFIMIMSWAVFLLLIQPKLL) threads the bilayer.

This sequence belongs to the ATPase protein 8 family. Component of the ATP synthase complex composed at least of ATP5F1A/subunit alpha, ATP5F1B/subunit beta, ATP5MC1/subunit c (homooctomer), MT-ATP6/subunit a, MT-ATP8/subunit 8, ATP5ME/subunit e, ATP5MF/subunit f, ATP5MG/subunit g, ATP5MK/subunit k, ATP5MJ/subunit j, ATP5F1C/subunit gamma, ATP5F1D/subunit delta, ATP5F1E/subunit epsilon, ATP5PF/subunit F6, ATP5PB/subunit b, ATP5PD/subunit d, ATP5PO/subunit OSCP. ATP synthase complex consists of a soluble F(1) head domain (subunits alpha(3) and beta(3)) - the catalytic core - and a membrane F(0) domain - the membrane proton channel (subunits c, a, 8, e, f, g, k and j). These two domains are linked by a central stalk (subunits gamma, delta, and epsilon) rotating inside the F1 region and a stationary peripheral stalk (subunits F6, b, d, and OSCP).

It localises to the mitochondrion membrane. Subunit 8, of the mitochondrial membrane ATP synthase complex (F(1)F(0) ATP synthase or Complex V) that produces ATP from ADP in the presence of a proton gradient across the membrane which is generated by electron transport complexes of the respiratory chain. ATP synthase complex consist of a soluble F(1) head domain - the catalytic core - and a membrane F(1) domain - the membrane proton channel. These two domains are linked by a central stalk rotating inside the F(1) region and a stationary peripheral stalk. During catalysis, ATP synthesis in the catalytic domain of F(1) is coupled via a rotary mechanism of the central stalk subunits to proton translocation. In vivo, can only synthesize ATP although its ATP hydrolase activity can be activated artificially in vitro. Part of the complex F(0) domain. This Rhea americana (Greater rhea) protein is ATP synthase F(0) complex subunit 8.